Reading from the N-terminus, the 78-residue chain is Large ribosomal subunit protein bL28 (78 aa).

It belongs to the bacterial ribosomal protein bL28 family.

This chain is Large ribosomal subunit protein bL28, found in Bordetella avium (strain 197N).